Reading from the N-terminus, the 342-residue chain is MRVAIVNDMPLAVEALRRSLAHDPELSLAWIASDGLQAVRRCAADLPDVILMDLMMPVMNGVEATRLIMAESPCAIIVVTSDVLQHTSLVFEAMGHGALDAVDTPVLGRGDPKAAAQRLLRKIRNAGWLIGKKTVALERTTAMASSDTDAALVVIGASAGGPPSLAAVLRALPASFPAAIVLVQHVDAAFTSGMAAWLNEQCVLPVRLASDGLRPEAGVVLLAGAGEHLVLGAERKLHYTTEPRESVYSPSIDVFFHSVAQHWRGRAAGVLLTGMGQDGALGLKAMRERGFFTIAQDRATSAVYGMPKAAAALDAACEILPLGDIAPRLEKVFAPPANPLFN.

Residues 2-119 (RVAIVNDMPL…GDPKAAAQRL (118 aa)) form the Response regulatory domain. A 4-aspartylphosphate modification is found at aspartate 53. Residues 146-329 (SDTDAALVVI…LPLGDIAPRL (184 aa)) enclose the CheB-type methylesterase domain. Active-site residues include serine 158, histidine 185, and aspartate 278.

It belongs to the CheB family. In terms of processing, phosphorylated by CheA. Phosphorylation of the N-terminal regulatory domain activates the methylesterase activity.

It localises to the cytoplasm. The catalysed reaction is [protein]-L-glutamate 5-O-methyl ester + H2O = L-glutamyl-[protein] + methanol + H(+). The enzyme catalyses L-glutaminyl-[protein] + H2O = L-glutamyl-[protein] + NH4(+). Its function is as follows. Involved in chemotaxis. Part of a chemotaxis signal transduction system that modulates chemotaxis in response to various stimuli. Catalyzes the demethylation of specific methylglutamate residues introduced into the chemoreceptors (methyl-accepting chemotaxis proteins or MCP) by CheR. Also mediates the irreversible deamidation of specific glutamine residues to glutamic acid. This Bordetella avium (strain 197N) protein is Protein-glutamate methylesterase/protein-glutamine glutaminase 1.